We begin with the raw amino-acid sequence, 226 residues long: TPD1 protein homolog 1A (226 aa).

The N-terminal stretch at 1 to 35 (MRVSSASSTPPPPAFAAAAWAVVLLAMLRSDVALA) is a signal peptide.

Interacts with MSP1. Expressed in roots, and anthers and ovules during meiosis.

Its function is as follows. Involved in cell specification during anther development. Required for the differentiation of primary parietal cells into secondary parietal cells in anthers. May serve as an extracellular ligand for the MSP1 receptor kinase to limit sporocyte number in ovules. This is TPD1 protein homolog 1A from Oryza sativa subsp. japonica (Rice).